Consider the following 314-residue polypeptide: Probable cell division protein WhiA (314 aa).

A DNA-binding region (H-T-H motif) is located at residues S274–N308.

Belongs to the WhiA family.

Functionally, involved in cell division and chromosome segregation. The polypeptide is Probable cell division protein WhiA (Staphylococcus aureus (strain Mu3 / ATCC 700698)).